A 469-amino-acid chain; its full sequence is Argininosuccinate lyase (469 aa).

The protein belongs to the lyase 1 family. Argininosuccinate lyase subfamily.

Its subcellular location is the cytoplasm. The enzyme catalyses 2-(N(omega)-L-arginino)succinate = fumarate + L-arginine. Its pathway is amino-acid biosynthesis; L-arginine biosynthesis; L-arginine from L-ornithine and carbamoyl phosphate: step 3/3. In Burkholderia cenocepacia (strain ATCC BAA-245 / DSM 16553 / LMG 16656 / NCTC 13227 / J2315 / CF5610) (Burkholderia cepacia (strain J2315)), this protein is Argininosuccinate lyase.